We begin with the raw amino-acid sequence, 360 residues long: Peptide chain release factor 1 (360 aa).

At Gln-237 the chain carries N5-methylglutamine.

The protein belongs to the prokaryotic/mitochondrial release factor family. Post-translationally, methylated by PrmC. Methylation increases the termination efficiency of RF1.

Its subcellular location is the cytoplasm. Functionally, peptide chain release factor 1 directs the termination of translation in response to the peptide chain termination codons UAG and UAA. The protein is Peptide chain release factor 1 of Pseudomonas fluorescens (strain SBW25).